Here is a 379-residue protein sequence, read N- to C-terminus: Polycomb group protein FIE2 (379 aa).

WD repeat units lie at residues 85–128, 131–171, 177–217, 243–280, 292–333, and 340–378; these read DKDE…LAKS, GHGD…CILI, GHRN…LYVD, VHSN…QSPG, VPEC…PVLI, and QCKS…PSSR.

This sequence belongs to the WD repeat ESC family. As to expression, widely expressed. Expressed in the embryo sac before pollination. After pollination, its expression persists, predominantly in the embryo and at lower levels in the endosperm.

It localises to the nucleus. In terms of biological role, polycomb group (PcG) protein. PcG proteins act by forming multiprotein complexes, which are required to maintain the transcriptionally repressive state of homeotic genes throughout development. PcG proteins are not required to initiate repression, but to maintain it during later stages of development. They probably act via the methylation of histones, rendering chromatin heritably changed in its expressibility. The protein is Polycomb group protein FIE2 (FIE2) of Zea mays (Maize).